The chain runs to 108 residues: UPF0060 membrane protein SAR2425 (108 aa).

4 helical membrane passes run 5–25 (IFIF…IWLW), 31–51 (SSLV…IATF), 60–80 (VYAA…MVVD), and 86–106 (KYDV…LLPS).

Belongs to the UPF0060 family.

It localises to the cell membrane. This chain is UPF0060 membrane protein SAR2425, found in Staphylococcus aureus (strain MRSA252).